The sequence spans 365 residues: PDZ and LIM domain protein 3 (365 aa).

Residues 1-84 (MPQNVILPGP…QLCLKIDRAE (84 aa)) form the PDZ domain. Residue S18 is modified to Phosphoserine. Residues 126-156 (FIIPGRSSGCSTPSGIDGGSGRSTPSSVSTL) form a disordered region. Positions 147 to 156 (RSTPSSVSTL) are enriched in polar residues. The LIM zinc-binding domain maps to 293–352 (PLCDKCGSGIVGAVVKARDKYRHPECFVCADCNLNLKQKGYFFVEGELYCETHARARMRP).

In terms of assembly, interacts with ACTN2. Forms a heterodimer with PDLIM4 (via LIM domain).

The protein resides in the cytoplasm. It localises to the myofibril. The protein localises to the sarcomere. It is found in the z line. Its function is as follows. May play a role in the organization of actin filament arrays within muscle cells. This is PDZ and LIM domain protein 3 (PDLIM3) from Sus scrofa (Pig).